Here is a 136-residue protein sequence, read N- to C-terminus: Small ribosomal subunit protein uS12 (136 aa).

Aspartate 89 carries the post-translational modification 3-methylthioaspartic acid. A disordered region spans residues 101 to 136 (SLDTSGVADRKQSRSKYGAKQPKAGVPAPVKGKGKR).

The protein belongs to the universal ribosomal protein uS12 family. In terms of assembly, part of the 30S ribosomal subunit. Contacts proteins S8 and S17. May interact with IF1 in the 30S initiation complex.

Its function is as follows. With S4 and S5 plays an important role in translational accuracy. Interacts with and stabilizes bases of the 16S rRNA that are involved in tRNA selection in the A site and with the mRNA backbone. Located at the interface of the 30S and 50S subunits, it traverses the body of the 30S subunit contacting proteins on the other side and probably holding the rRNA structure together. The combined cluster of proteins S8, S12 and S17 appears to hold together the shoulder and platform of the 30S subunit. This Pelodictyon phaeoclathratiforme (strain DSM 5477 / BU-1) protein is Small ribosomal subunit protein uS12.